A 173-amino-acid polypeptide reads, in one-letter code: ATP synthase subunit b (173 aa).

A helical membrane pass occupies residues 12–34 (AFGNLYAIGWSAVNFLVLLALMY).

It belongs to the ATPase B chain family. F-type ATPases have 2 components, F(1) - the catalytic core - and F(0) - the membrane proton channel. F(1) has five subunits: alpha(3), beta(3), gamma(1), delta(1), epsilon(1). F(0) has three main subunits: a(1), b(2) and c(10-14). The alpha and beta chains form an alternating ring which encloses part of the gamma chain. F(1) is attached to F(0) by a central stalk formed by the gamma and epsilon chains, while a peripheral stalk is formed by the delta and b chains.

It localises to the cell membrane. In terms of biological role, f(1)F(0) ATP synthase produces ATP from ADP in the presence of a proton or sodium gradient. F-type ATPases consist of two structural domains, F(1) containing the extramembraneous catalytic core and F(0) containing the membrane proton channel, linked together by a central stalk and a peripheral stalk. During catalysis, ATP synthesis in the catalytic domain of F(1) is coupled via a rotary mechanism of the central stalk subunits to proton translocation. Its function is as follows. Component of the F(0) channel, it forms part of the peripheral stalk, linking F(1) to F(0). The polypeptide is ATP synthase subunit b (Syntrophomonas wolfei subsp. wolfei (strain DSM 2245B / Goettingen)).